A 165-amino-acid chain; its full sequence is Type 3 secretion system regulator YopR (165 aa).

It belongs to the YopR family.

It localises to the secreted. Functionally, may be involved in the regulation of the assembly of the type III secretion system (T3SS), also called injectisome, which is used to inject bacterial effector proteins into eukaryotic host cells. May control the secretion and/or polymerization of YscF/SctF, the principal component of the needle filament, thereby impacting the assembly of the T3SS. Involved in pathogenesis. In Yersinia pseudotuberculosis serotype I (strain IP32953), this protein is Type 3 secretion system regulator YopR.